Consider the following 201-residue polypeptide: Segregation and condensation protein B (201 aa).

It belongs to the ScpB family. In terms of assembly, homodimer. Homodimerization may be required to stabilize the binding of ScpA to the Smc head domains. Component of a cohesin-like complex composed of ScpA, ScpB and the Smc homodimer, in which ScpA and ScpB bind to the head domain of Smc. The presence of the three proteins is required for the association of the complex with DNA.

Its subcellular location is the cytoplasm. Functionally, participates in chromosomal partition during cell division. May act via the formation of a condensin-like complex containing Smc and ScpA that pull DNA away from mid-cell into both cell halves. The polypeptide is Segregation and condensation protein B (Enterococcus faecalis (strain ATCC 700802 / V583)).